We begin with the raw amino-acid sequence, 152 residues long: Mitochondrial holo-[acyl-carrier-protein] synthase (152 aa).

This sequence belongs to the P-Pant transferase superfamily. AcpS family.

The protein resides in the mitochondrion. It catalyses the reaction apo-[ACP] + CoA = holo-[ACP] + adenosine 3',5'-bisphosphate + H(+). Transfers the 4'-phosphopantetheine moiety from coenzyme A to a Ser of mitochondrial acyl-carrier-protein. This Candida glabrata (strain ATCC 2001 / BCRC 20586 / JCM 3761 / NBRC 0622 / NRRL Y-65 / CBS 138) (Yeast) protein is Mitochondrial holo-[acyl-carrier-protein] synthase (PPT2).